The sequence spans 85 residues: WAP four-disulfide core domain protein 12 (85 aa).

The first 21 residues, 1-21 (MWPNSILVLMTLLISSTLVTG), serve as a signal peptide directing secretion. Residues 25–72 (KGEEKRVCPPDYVRCIRQDDPQCYSDNDCGDQEICCFWQCGFKCVLPV) enclose the WAP domain. Disulfide bonds link cysteine 32–cysteine 60, cysteine 39–cysteine 64, cysteine 47–cysteine 59, and cysteine 53–cysteine 68.

In terms of tissue distribution, constitutively expressed in tongue.

The protein localises to the secreted. In terms of biological role, antibacterial protein which inhibits the growth of E.coli and S.aureus. Putative acid-stable proteinase inhibitor. The polypeptide is WAP four-disulfide core domain protein 12 (Mus musculus (Mouse)).